We begin with the raw amino-acid sequence, 309 residues long: Protein FdhE homolog (309 aa).

Positions 1 to 22 are disordered; that stretch reads MSIRIVPQEQLEQNGKSTPEGH.

The protein belongs to the FdhE family.

It localises to the cytoplasm. Functionally, necessary for formate dehydrogenase activity. This Pectobacterium carotovorum subsp. carotovorum (strain PC1) protein is Protein FdhE homolog.